The following is a 600-amino-acid chain: Transcription factor rlmA (600 aa).

Positions 1–61 (MGRRKIEIKA…KKLYEFSSCD (61 aa)) constitute an MADS-box domain. Disordered stretches follow at residues 71-518 (YYGP…NIET) and 544-600 (GFGR…KSKT). A compositionally biased stretch (basic and acidic residues) spans 75–89 (PHEHKGPEDFNGKRD). Residues 151–160 (PQPQGASRPS) show a composition bias toward polar residues. Residues 222–242 (QPLPPHAIPPHPMPQPVPPHH) show a composition bias toward pro residues. Residues 243-260 (QAPQHLPQHPHPLAQQTP) are compositionally biased toward low complexity. Residues 328–339 (HQRSLSSKSRSI) are compositionally biased toward polar residues. The segment covering 364–384 (PRTESADVKAEAKQNDSKEIK) has biased composition (basic and acidic residues). Over residues 386–397 (PAQPVAPPPPPR) the composition is skewed to pro residues. Residues 440 to 452 (RGSATADSSSSTG) show a composition bias toward low complexity. Over residues 453–468 (NQTVTPAKANPDTNHS) the composition is skewed to polar residues. A compositionally biased stretch (pro residues) spans 490–501 (PPNPFARPPPPG). A compositionally biased stretch (low complexity) spans 503-515 (ASQNSNAYNSNNN).

This sequence belongs to the MEF2 family. In terms of assembly, interacts with hsp90. Post-translationally, phosphorylation during asexual development.

It localises to the nucleus. Its function is as follows. Transcription factor; part of cell wall integrity (CWI) signaling pathway composed of pkcA, the bck1-mkk2-mpka MAPK cascade and the downstream rlmA transcription regulator. The CWI signaling pathway regulates cell wall integrity and pyomelanin formation. CWI also controls oxidative stress response, gliotoxin production, iron adaptation and asexual development. Finally, CWI is constitutively required for A.fumigatus to cope with the temperature increase found in the mammalian lung environment, during infection. Positively regulates the phosphorylation of mpkA. Involved in tolerance to oxidative damage and transcriptional regulation of genes related to oxidative stress adaptation. Directly regulates the expression of regulators of conidiation, including flbB, flbC, brlA, abaA, and rasB, as well as genes involved in cell wall synthesis and remodeling. Specifically associates with the target fumiquinazoline (fmq) cluster genes promoters at conserved motifs (5'-TAWWWWTA-3') during conidiation to supplement mature conidia with fumiquinazoline C. Also controls the DHN-melanin production via binding the promoter of pksP. This Aspergillus fumigatus (strain ATCC MYA-4609 / CBS 101355 / FGSC A1100 / Af293) (Neosartorya fumigata) protein is Transcription factor rlmA.